The chain runs to 78 residues: Large ribosomal subunit protein bL28 (78 aa).

Positions 1–30 (MAAHCQVTGAGPGFGHSISHSHRRTKRRFD) are disordered.

It belongs to the bacterial ribosomal protein bL28 family.

The chain is Large ribosomal subunit protein bL28 from Micrococcus luteus (strain ATCC 4698 / DSM 20030 / JCM 1464 / CCM 169 / CCUG 5858 / IAM 1056 / NBRC 3333 / NCIMB 9278 / NCTC 2665 / VKM Ac-2230) (Micrococcus lysodeikticus).